Consider the following 157-residue polypeptide: Probable Brix domain-containing ribosomal biogenesis protein (157 aa).

The 157-residue stretch at 1–157 (MLVTTSRKPS…KFNIKGFKKY (157 aa)) folds into the Brix domain.

Its function is as follows. Probably involved in the biogenesis of the ribosome. The chain is Probable Brix domain-containing ribosomal biogenesis protein from Methanosarcina mazei (strain ATCC BAA-159 / DSM 3647 / Goe1 / Go1 / JCM 11833 / OCM 88) (Methanosarcina frisia).